Consider the following 566-residue polypeptide: OTU domain-containing protein 5 (566 aa).

Disordered stretches follow at residues 1 to 117 (MTIL…GDAL) and 145 to 175 (GPGH…GAGY). Residues 11–30 (PPDADPANEPPPPGPLPPAP) are compositionally biased toward pro residues. Over residues 34–47 (AGVGVGGGGTGVGG) the composition is skewed to gly residues. The span at 63 to 75 (ASPPPQGPLPGPP) shows a compositional bias: pro residues. The residue at position 64 (S64) is a Phosphoserine. Low complexity predominate over residues 84-97 (AVPPGAVAGPRPQQ). Positions 105-115 (GPGGPGGGPGD) are enriched in gly residues. Position 165 is a phosphoserine (S165). Y175 bears the Phosphotyrosine mark. A Phosphoserine modification is found at S177. At T195 the chain carries Phosphothreonine. In terms of domain architecture, OTU spans 213-336 (FIIKQMKEDG…NIHYNSVVNP (124 aa)). Residues 218 to 224 (MKEDGAC) are cys-loop. D221 is a catalytic residue. Catalysis depends on C224, which acts as the Nucleophile. The tract at residues 273–283 (KRKNNCHGNHI) is variable-loop. Position 323 is a phosphoserine (S323). A his-loop region spans residues 324-329 (YHRNIH). Residue H329 is part of the active site. S332 and S370 each carry phosphoserine. The segment at 413 to 499 (ARQVRGPSQP…TSSQFSAGGD (87 aa)) is disordered. Low complexity-rich tracts occupy residues 425–438 (ASAT…AASS) and 445–457 (SRSP…ASSP). Position 447 is a phosphoserine (S447). T502 is subject to Phosphothreonine. S503 carries the phosphoserine modification.

The protein belongs to the peptidase C85 family. As to quaternary structure, interacts with TRAF3. In terms of processing, phosphorylation at Ser-177 is required for deubiquitinating activity. Phosphorylation at Ser-323, Ser-332 and Ser-503 by MTOR promotes its activity.

Its subcellular location is the nucleus. It carries out the reaction Thiol-dependent hydrolysis of ester, thioester, amide, peptide and isopeptide bonds formed by the C-terminal Gly of ubiquitin (a 76-residue protein attached to proteins as an intracellular targeting signal).. With respect to regulation, inhibited by N-ethyl-maleimide (NEM). Deubiquitinating enzyme that functions as a negative regulator of the innate immune system. Has peptidase activity towards 'Lys-48'- and 'Lys-63'-linked polyubiquitin chains. Can also cleave 'Lys-11'-linked ubiquitin chains (in vitro). Acts via TRAF3 deubiquitination and subsequent suppression of type I interferon (IFN) production. Controls neuroectodermal differentiation through cleaving 'Lys-48'-linked ubiquitin chains to counteract degradation of select chromatin regulators such as ARID1A, HDAC2 and HCF1. Acts as a positive regulator of mTORC1 and mTORC2 signaling following phosphorylation by MTOR: acts by mediating deubiquitination of BTRC, leading to its stability. This Mus musculus (Mouse) protein is OTU domain-containing protein 5.